A 149-amino-acid chain; its full sequence is Nucleoside diphosphate kinase 1 (149 aa).

Residues Lys9, Phe57, Arg85, Thr91, Arg102, and Asn112 each coordinate ATP. His115 functions as the Pros-phosphohistidine intermediate in the catalytic mechanism.

As to quaternary structure, homohexamer. Requires Mg(2+) as cofactor.

It catalyses the reaction a 2'-deoxyribonucleoside 5'-diphosphate + ATP = a 2'-deoxyribonucleoside 5'-triphosphate + ADP. The catalysed reaction is a ribonucleoside 5'-diphosphate + ATP = a ribonucleoside 5'-triphosphate + ADP. Its function is as follows. Major role in the synthesis of nucleoside triphosphates other than ATP. The ATP gamma phosphate is transferred to the NDP beta phosphate via a ping-pong mechanism, using a phosphorylated active-site intermediate. This NDK is microtubule-associated. This Oryza sativa subsp. indica (Rice) protein is Nucleoside diphosphate kinase 1 (NDKR).